The following is a 320-amino-acid chain: MQNRNTFSWVKEQMTRSIFVSMMIYIITRASISNAYPIFAQQGYENPREATGRIVCANCHLANKPVDIEVPQAVLPDTVFEAVVRIPYDMQLKQVLANGKKGGLNVGAVLILPDGFELAPPDRISPAMKEKIGNLSFQSYRPTKKNILVIGPVPGQKYNEILFPILSPDPATKKEVHFLKYPIYVGGNRGRGQIYPDGSKSNNTVYNASASGIISRIIRKEKGGYEITIANALDGRQVVDIIPPGPELLVSEGESIKLDQPLTSNPNVGGFGQGDAEIVLQDPLRIQGLFLFLASVILAQIFLVLKKKQFEKVQLAEMNF.

The first 35 residues, 1-35 (MQNRNTFSWVKEQMTRSIFVSMMIYIITRASISNA), serve as a signal peptide directing secretion. Heme is bound by residues Y36, C56, C59, and H60. A helical transmembrane segment spans residues 286-306 (IQGLFLFLASVILAQIFLVLK).

This sequence belongs to the cytochrome f family. The 4 large subunits of the cytochrome b6-f complex are cytochrome b6, subunit IV (17 kDa polypeptide, petD), cytochrome f and the Rieske protein, while the 4 small subunits are PetG, PetL, PetM and PetN. The complex functions as a dimer. It depends on heme as a cofactor.

The protein resides in the plastid. The protein localises to the chloroplast thylakoid membrane. Component of the cytochrome b6-f complex, which mediates electron transfer between photosystem II (PSII) and photosystem I (PSI), cyclic electron flow around PSI, and state transitions. This Amborella trichopoda protein is Cytochrome f.